Reading from the N-terminus, the 151-residue chain is Ribonuclease H (151 aa).

One can recognise an RNase H type-1 domain in the interval 1–141; sequence MKHVDIFTDG…ADELARKGME (141 aa). Mg(2+) contacts are provided by D9, E47, D69, and D133.

It belongs to the RNase H family. In terms of assembly, monomer. Mg(2+) serves as cofactor.

The protein resides in the cytoplasm. The catalysed reaction is Endonucleolytic cleavage to 5'-phosphomonoester.. Endonuclease that specifically degrades the RNA of RNA-DNA hybrids. In Rhizobium johnstonii (strain DSM 114642 / LMG 32736 / 3841) (Rhizobium leguminosarum bv. viciae), this protein is Ribonuclease H.